Here is a 216-residue protein sequence, read N- to C-terminus: FMN-dependent NADH:quinone oxidoreductase (216 aa).

Residues 15-17 and 139-142 each bind FMN; these read SVS and SRGG.

The protein belongs to the azoreductase type 1 family. Homodimer. The cofactor is FMN.

The catalysed reaction is 2 a quinone + NADH + H(+) = 2 a 1,4-benzosemiquinone + NAD(+). The enzyme catalyses N,N-dimethyl-1,4-phenylenediamine + anthranilate + 2 NAD(+) = 2-(4-dimethylaminophenyl)diazenylbenzoate + 2 NADH + 2 H(+). Its function is as follows. Quinone reductase that provides resistance to thiol-specific stress caused by electrophilic quinones. Functionally, also exhibits azoreductase activity. Catalyzes the reductive cleavage of the azo bond in aromatic azo compounds to the corresponding amines. This is FMN-dependent NADH:quinone oxidoreductase from Acidovorax ebreus (strain TPSY) (Diaphorobacter sp. (strain TPSY)).